The chain runs to 160 residues: Calsequestrin-2 (160 aa).

It belongs to the calsequestrin family. In terms of assembly, monomer, homodimer and homooligomer. Mostly monomeric in the absence of calcium. Forms higher oligomers in a calcium-dependent manner. Dimers associate to form tetramers, that then form linear homomer chains. Interacts with ASPH and TRDN. Post-translationally, phosphorylation in the C-terminus, probably by CK2, moderately increases calcium buffering capacity. In terms of processing, N-glycosylated.

The protein resides in the sarcoplasmic reticulum lumen. Calsequestrin is a high-capacity, moderate affinity, calcium-binding protein and thus acts as an internal calcium store in muscle. Calcium ions are bound by clusters of acidic residues at the protein surface, especially at the interface between subunits. Can bind around 60 Ca(2+) ions. Regulates the release of lumenal Ca(2+) via the calcium release channel RYR2; this plays an important role in triggering muscle contraction. Plays a role in excitation-contraction coupling in the heart and in regulating the rate of heart beats. The protein is Calsequestrin-2 (CASQ2) of Sus scrofa (Pig).